The chain runs to 375 residues: Secondary metabolism regulator laeA (375 aa).

Positions 15–26 (ASPNRNNYSYQG) are enriched in polar residues. 2 disordered regions span residues 15-37 (ASPN…RSRQ) and 50-75 (QEPP…TSHY).

This sequence belongs to the methyltransferase superfamily. LaeA methyltransferase family. Component of the heterotrimeric velvet complex composed of laeA, veA and velB; VeA acting as a bridging protein between laeA and velB.

It is found in the nucleus. The catalysed reaction is L-methionyl-[protein] + S-adenosyl-L-methionine = S-methyl-L-methionyl-[protein] + S-adenosyl-L-homocysteine. Functionally, methyltransferase that performs automethylation. No other methyl-accepting substrate has been identified yet. Component of the velvet transcription factor complex that acts as a global regulator for secondary metabolite gene expression. Controls the expression of the citric acid, demethylkotanin, orlandin, asperrubrol, tensidol B, atromentin and JBIR8 gene clusters. Also represses the expression of genes related to the production of BMS-192548 and aspernigrin A. The polypeptide is Secondary metabolism regulator laeA (Aspergillus niger (strain ATCC 1015 / CBS 113.46 / FGSC A1144 / LSHB Ac4 / NCTC 3858a / NRRL 328 / USDA 3528.7)).